The sequence spans 577 residues: MGTSYRKLGYVLFLMLGMIVEEGIAYVRVKEKQSSPSFMGIYDESAVASDAVPCAEAGQSMLRQKGSAVDAAIATLLCIGVYNPQSSGIGGGSFMVIYDRSTRTPEVIDAREEAPAAATQKMFKGDKKLSSEGGLSIAVPGELRGMALAHERHGKLDWETLFQPAIRLAKEGFPVGSELAMALREQRSHILNSPTLKAVFTDPVSGDILKENDIVIRTKLGETLEKIAKNGADEFYEGQVAKDLINDIKSFGGIITAEDLKNYQPVLKNATVAHLSGCLTLYSVPPPSSGYILSFILRVLDKFHFSKASVSDIENATLTYHRFLETLKYAYAYRTKLGDERIENVSSVIAELTSEDVIEKTKQKIEDGKTYEPLHYGAQLATNDHGTAHISVVSREGDAVVVTTTINYWFGSGLRSPSTGVILNDEMDDFSAPDIQNIYGVPPSKANFIVPGKRPQSSTCPSIFVNKGGDVVMAIGASGGTRITSSVSLTSMRVLWLGRNIKEAIDEPRLHHQLLPDEIEYESKFPNEILEKLKAIGHKTKPAGAFGSLVVGIKRMKGGTLTANYDYRRGGSVDGSK.

The first 25 residues, Met1–Ala25, serve as a signal peptide directing secretion.

As to quaternary structure, heterodimer composed of subunits alpha and beta; probably disulfide-linked. Expressed by the venom gland.

It localises to the secreted. Its function is as follows. Dose-dependently induces human platelet aggregation on both plasma rich platelet and washed platelet (max. response at 3.2 ug/mL) and causes hemolysis against mouse and rabbit erythrocytes (35 and 65% respectively at 5 ug/mL). Does not show hemolytic activity against human erythrocytes (even at 100 ug/mL). This is Scoloptoxin SSD14 from Scolopendra dehaani (Thai centipede).